The following is a 192-amino-acid chain: Ion-translocating oxidoreductase complex subunit A (192 aa).

Transmembrane regions (helical) follow at residues 5-25 (FLLFIGTVLVNNFVLVKFLGL), 39-59 (VGMSFATTFVLTLTAAVSYIV), 63-83 (ILLPLDLVYLQTIGFILVIAV), 102-122 (LLGIFLPLITTNCAILGLALL), 134-154 (IIYGFSAGVGFSLVLVVFSSM), and 171-191 (SIAMITAGLMSLAFMGFTGLI).

It belongs to the NqrDE/RnfAE family. In terms of assembly, the complex is composed of six subunits: RnfA, RnfB, RnfC, RnfD, RnfE and RnfG.

It is found in the cell inner membrane. In terms of biological role, part of a membrane-bound complex that couples electron transfer with translocation of ions across the membrane. In Psychromonas ingrahamii (strain DSM 17664 / CCUG 51855 / 37), this protein is Ion-translocating oxidoreductase complex subunit A.